A 696-amino-acid polypeptide reads, in one-letter code: Elongation factor G (696 aa).

In terms of domain architecture, tr-type G spans 8-288 (EDYRNFGIMA…AVVDFLPSPI (281 aa)). Residues 17-24 (AHIDAGKT), 86-90 (DTPGH), and 140-143 (NKMD) each bind GTP.

This sequence belongs to the TRAFAC class translation factor GTPase superfamily. Classic translation factor GTPase family. EF-G/EF-2 subfamily.

The protein resides in the cytoplasm. Catalyzes the GTP-dependent ribosomal translocation step during translation elongation. During this step, the ribosome changes from the pre-translocational (PRE) to the post-translocational (POST) state as the newly formed A-site-bound peptidyl-tRNA and P-site-bound deacylated tRNA move to the P and E sites, respectively. Catalyzes the coordinated movement of the two tRNA molecules, the mRNA and conformational changes in the ribosome. This is Elongation factor G from Chelativorans sp. (strain BNC1).